A 248-amino-acid chain; its full sequence is 2,3-bisphosphoglycerate-dependent phosphoglycerate mutase (248 aa).

Residues 8–15, 21–22, R60, 87–90, K98, 114–115, and 183–184 contribute to the substrate site; these read RHGESIWN, TG, EKHY, RR, and GN. Catalysis depends on H9, which acts as the Tele-phosphohistidine intermediate. The active-site Proton donor/acceptor is the E87.

It belongs to the phosphoglycerate mutase family. BPG-dependent PGAM subfamily.

It carries out the reaction (2R)-2-phosphoglycerate = (2R)-3-phosphoglycerate. It functions in the pathway carbohydrate degradation; glycolysis; pyruvate from D-glyceraldehyde 3-phosphate: step 3/5. Its function is as follows. Catalyzes the interconversion of 2-phosphoglycerate and 3-phosphoglycerate. In Parabacteroides distasonis (strain ATCC 8503 / DSM 20701 / CIP 104284 / JCM 5825 / NCTC 11152), this protein is 2,3-bisphosphoglycerate-dependent phosphoglycerate mutase.